The following is a 548-amino-acid chain: Chaperonin GroEL (548 aa).

ATP is bound by residues 30 to 33, Lys-51, 87 to 91, Gly-415, 479 to 481, and Asp-495; these read TLGP, DGTTT, and NAA.

This sequence belongs to the chaperonin (HSP60) family. As to quaternary structure, forms a cylinder of 14 subunits composed of two heptameric rings stacked back-to-back. Interacts with the co-chaperonin GroES.

Its subcellular location is the cytoplasm. The enzyme catalyses ATP + H2O + a folded polypeptide = ADP + phosphate + an unfolded polypeptide.. Its function is as follows. Together with its co-chaperonin GroES, plays an essential role in assisting protein folding. The GroEL-GroES system forms a nano-cage that allows encapsulation of the non-native substrate proteins and provides a physical environment optimized to promote and accelerate protein folding. The polypeptide is Chaperonin GroEL (Sodalis glossinidius (strain morsitans)).